Here is a 181-residue protein sequence, read N- to C-terminus: Crustacyanin-A1 subunit (181 aa).

Intrachain disulfides connect cysteine 12-cysteine 121, cysteine 51-cysteine 173, and cysteine 117-cysteine 150.

Belongs to the calycin superfamily. Lipocalin family. In terms of assembly, oligomer; Can form dimers (beta-crustacyanin); or complexes of 16 subunits (alpha-crustacyanin). There are five types of subunits: A1, A2, A3, C1 and C2. Found in the carapace.

It is found in the secreted. The protein resides in the extracellular space. In terms of biological role, binds the carotenoid astaxanthin (AXT) which provides the blue coloration to the carapace of the lobster. The polypeptide is Crustacyanin-A1 subunit (Homarus gammarus (European lobster)).